Here is a 992-residue protein sequence, read N- to C-terminus: GATOR2 complex protein WDR59 (992 aa).

WD repeat units follow at residues 57 to 98 (QSKW…GEVG), 103 to 143 (GHTR…KPTV), 146 to 185 (SAVAGASQVKWNKKNANYLATSHDGDVRIWDKRKPSTAVE), 189 to 229 (AHLS…KYLN), 232 to 276 (PCQV…APVH), 278 to 318 (FVGH…RVDY), and 319 to 362 (QMQR…SLSH). Residues 343–373 (PEPEKTPHPQDIDHQPSLSHGEEDAIKEDPP) are disordered. Basic and acidic residues predominate over residues 344–373 (EPEKTPHPQDIDHQPSLSHGEEDAIKEDPP). Positions 393–494 (QEFSLINVQI…RQLVSCLESF (102 aa)) constitute an RWD domain. Residue serine 564 is modified to Phosphoserine. The WD 8 repeat unit spans residues 660–706 (KSLGELYILNVNDTQETCQKNATSAMLVGRKDLVQVWSLATVATDLC). A phosphoserine mark is found at serine 839, serine 840, and serine 848. The tract at residues 849–870 (LTYSDPRERERDQHDKNKRLLD) is disordered. Residues 853 to 869 (DPRERERDQHDKNKRLL) show a composition bias toward basic and acidic residues. Residues 919-939 (YCSHCRSEVRGTQCAICKGFT) form a C4-type zinc finger. Zn(2+) is bound by residues cysteine 920, cysteine 923, cysteine 932, cysteine 935, cysteine 945, cysteine 956, histidine 961, histidine 964, histidine 967, cysteine 978, cysteine 982, cysteine 984, and cysteine 986. Residues 940-989 (FQCAICHVAVRGSSNFCLTCGHGGHTSHMMEWFRTQEVCPTGCGCHCLLE) form an RING-type; atypical zinc finger.

It belongs to the WD repeat WDR59 family. As to quaternary structure, component of the GATOR2 subcomplex, composed of MIOS, SEC13, SEH1L, WDR24 and WDR59. The GATOR2 complex interacts with CASTOR1 and CASTOR2; the interaction is negatively regulated by arginine. The GATOR2 complex interacts with SESN1, SESN2 and SESN3; the interaction is negatively regulated by amino acids. Interacts with DDB1-CUL4A/B E3 ligase complexes.

Its subcellular location is the lysosome membrane. With respect to regulation, the GATOR2 complex is negatively regulated by the upstream amino acid sensors CASTOR1 and SESN2, which sequester the GATOR2 complex in absence of amino acids. In the presence of abundant amino acids, GATOR2 is released from CASTOR1 and SESN2 and activated. In terms of biological role, as a component of the GATOR2 complex, functions as an activator of the amino acid-sensing branch of the mTORC1 signaling pathway. The GATOR2 complex indirectly activates mTORC1 through the inhibition of the GATOR1 subcomplex. GATOR2 probably acts as an E3 ubiquitin-protein ligase toward GATOR1. In the presence of abundant amino acids, the GATOR2 complex mediates ubiquitination of the NPRL2 core component of the GATOR1 complex, leading to GATOR1 inactivation. In the absence of amino acids, GATOR2 is inhibited, activating the GATOR1 complex. In Mus musculus (Mouse), this protein is GATOR2 complex protein WDR59.